Reading from the N-terminus, the 541-residue chain is Membrane protein insertase YidC (541 aa).

5 consecutive transmembrane segments (helical) span residues 6 to 26 (NILL…WQAD), 349 to 369 (FVGN…GLLF), 420 to 440 (GGCL…WVLL), 457 to 477 (LSVQ…MFVM), and 500 to 520 (MIFT…WLVG).

This sequence belongs to the OXA1/ALB3/YidC family. Type 1 subfamily. In terms of assembly, interacts with the Sec translocase complex via SecD. Specifically interacts with transmembrane segments of nascent integral membrane proteins during membrane integration.

It is found in the cell inner membrane. In terms of biological role, required for the insertion and/or proper folding and/or complex formation of integral membrane proteins into the membrane. Involved in integration of membrane proteins that insert both dependently and independently of the Sec translocase complex, as well as at least some lipoproteins. Aids folding of multispanning membrane proteins. The protein is Membrane protein insertase YidC of Shewanella sp. (strain ANA-3).